A 288-amino-acid polypeptide reads, in one-letter code: Putative alkaline ceramidase dcd3A (288 aa).

N-linked (GlcNAc...) asparagine glycosylation is present at N23. Transmembrane regions (helical) follow at residues 41–61 (IISLFGIYGIWIMMPNFGTGV), 78–98 (VILSYISLIVVGVGSAFYHAT), 105–125 (LFDELPMIYTALIMLYIMVTV), 146–166 (HLLPYLLIAYGLFVTITILVI), 172–192 (ILQVSFGALVFYVVFHSIYLI), 206–226 (SYLYKYAFVSMLVGFTCWVVE), and 240–260 (LHAFWHFFTGMSTYVWTQFLI).

It belongs to the alkaline ceramidase family.

The protein resides in the membrane. The chain is Putative alkaline ceramidase dcd3A (dcd3A) from Dictyostelium discoideum (Social amoeba).